Reading from the N-terminus, the 193-residue chain is Probable GTP-binding protein EngB (193 aa).

The region spanning 22–193 is the EngB-type G domain; sequence GLPEFAFAGR…LIAVLESYLA (172 aa). Residues 30–37, 57–61, 75–78, 142–145, and 173–175 each bind GTP; these read GRSNVGKS, GKTQG, DLPG, TKID, and FSS. Residues S37 and T59 each coordinate Mg(2+).

It belongs to the TRAFAC class TrmE-Era-EngA-EngB-Septin-like GTPase superfamily. EngB GTPase family. Mg(2+) serves as cofactor.

Its function is as follows. Necessary for normal cell division and for the maintenance of normal septation. The sequence is that of Probable GTP-binding protein EngB from Desulfotalea psychrophila (strain LSv54 / DSM 12343).